We begin with the raw amino-acid sequence, 425 residues long: tRNA(Ile)-lysidine synthase (425 aa).

27–32 (SGGLDS) serves as a coordination point for ATP.

Belongs to the tRNA(Ile)-lysidine synthase family.

It is found in the cytoplasm. It catalyses the reaction cytidine(34) in tRNA(Ile2) + L-lysine + ATP = lysidine(34) in tRNA(Ile2) + AMP + diphosphate + H(+). Ligates lysine onto the cytidine present at position 34 of the AUA codon-specific tRNA(Ile) that contains the anticodon CAU, in an ATP-dependent manner. Cytidine is converted to lysidine, thus changing the amino acid specificity of the tRNA from methionine to isoleucine. The sequence is that of tRNA(Ile)-lysidine synthase from Streptococcus pneumoniae (strain Taiwan19F-14).